The primary structure comprises 102 residues: Small ribosomal subunit protein uS10 (102 aa).

This sequence belongs to the universal ribosomal protein uS10 family. Part of the 30S ribosomal subunit.

In terms of biological role, involved in the binding of tRNA to the ribosomes. The sequence is that of Small ribosomal subunit protein uS10 from Lactiplantibacillus plantarum (strain ATCC BAA-793 / NCIMB 8826 / WCFS1) (Lactobacillus plantarum).